We begin with the raw amino-acid sequence, 445 residues long: Tubulin beta-4B chain (445 aa).

The MREI motif signature appears at 1–4 (MREI). Gln-11 contributes to the GTP binding site. Thr-55 bears the Phosphothreonine mark. An N6-acetyllysine modification is found at Lys-58. 5 residues coordinate GTP: Glu-69, Ser-138, Gly-142, Thr-143, and Gly-144. Residue Glu-69 coordinates Mg(2+). Ser-172 bears the Phosphoserine; by CDK1 mark. GTP contacts are provided by Asn-204 and Asn-226. The interval 426 to 445 (QDATAEEEGEFEEEAEEEVA) is disordered. Residues 429–445 (TAEEEGEFEEEAEEEVA) show a composition bias toward acidic residues. The residue at position 438 (Glu-438) is a 5-glutamyl polyglutamate.

The protein belongs to the tubulin family. In terms of assembly, dimer of alpha and beta chains. A typical microtubule is a hollow water-filled tube with an outer diameter of 25 nm and an inner diameter of 15 nM. Alpha-beta heterodimers associate head-to-tail to form protofilaments running lengthwise along the microtubule wall with the beta-tubulin subunit facing the microtubule plus end conferring a structural polarity. Microtubules usually have 13 protofilaments but different protofilament numbers can be found in some organisms and specialized cells. Component of sperm flagellar doublet microtubules. The cofactor is Mg(2+). Some glutamate residues at the C-terminus are polyglycylated, resulting in polyglycine chains on the gamma-carboxyl group. Glycylation is mainly limited to tubulin incorporated into axonemes (cilia and flagella) whereas glutamylation is prevalent in neuronal cells, centrioles, axonemes, and the mitotic spindle. Both modifications can coexist on the same protein on adjacent residues, and lowering polyglycylation levels increases polyglutamylation, and reciprocally. Cilia and flagella glycylation is required for their stability and maintenance. Flagella glycylation controls sperm motility. Post-translationally, some glutamate residues at the C-terminus are polyglutamylated, resulting in polyglutamate chains on the gamma-carboxyl group. Polyglutamylation plays a key role in microtubule severing by spastin (SPAST). SPAST preferentially recognizes and acts on microtubules decorated with short polyglutamate tails: severing activity by SPAST increases as the number of glutamates per tubulin rises from one to eight, but decreases beyond this glutamylation threshold. Glutamylation is also involved in cilia motility. In terms of processing, phosphorylated on Ser-172 by CDK1 during the cell cycle, from metaphase to telophase, but not in interphase. This phosphorylation inhibits tubulin incorporation into microtubules.

Its subcellular location is the cytoplasm. It localises to the cytoskeleton. The protein resides in the flagellum axoneme. Functionally, tubulin is the major constituent of microtubules, a cylinder consisting of laterally associated linear protofilaments composed of alpha- and beta-tubulin heterodimers. Microtubules grow by the addition of GTP-tubulin dimers to the microtubule end, where a stabilizing cap forms. Below the cap, tubulin dimers are in GDP-bound state, owing to GTPase activity of alpha-tubulin. The protein is Tubulin beta-4B chain (TUBB4B) of Bos taurus (Bovine).